A 172-amino-acid chain; its full sequence is Podoplanin (172 aa).

A signal peptide spans 1-22 (MWTVPVLFWVLGSVWFWDSAQG). Topologically, residues 23–141 (GTIGVNEDDI…KKDGLPVVTL (119 aa)) are extracellular. Thr37, Thr51, Thr52, Thr53, and Thr56 each carry an O-linked (GalNAc...) threonine glycan. Positions 49–132 (KITTTGATGG…AGDETQTTDK (84 aa)) are disordered. The segment covering 51 to 63 (TTTGATGGLNEST) has biased composition (polar residues). An N-linked (GlcNAc...) asparagine glycan is attached at Asn60. Thr63, Thr71, and Thr77 each carry an O-linked (GalNAc...) threonine glycan. The segment covering 72–81 (QRERGTKPPL) has biased composition (basic and acidic residues). Ser85 carries an O-linked (GalNAc...) serine glycan. A glycan (O-linked (GalNAc...) threonine) is linked at Thr86. Ser87 carries O-linked (GalNAc...) serine glycosylation. Thr89 carries an O-linked (GalNAc...) threonine glycan. An O-linked (GalNAc...) serine glycan is attached at Ser90. Positions 90 to 99 (SDHDHREHES) are enriched in basic and acidic residues. Residues Thr100, Thr101, Thr102, Thr107, and Thr115 are each glycosylated (O-linked (GalNAc...) threonine). A compositionally biased stretch (low complexity) spans 100–109 (TTTVKVVTSH). A compositionally biased stretch (basic and acidic residues) spans 110 to 132 (SVDKKTSHPNRDNAGDETQTTDK). The chain crosses the membrane as a helical span at residues 142-162 (VGIIVGVLLAIGFVGGIFIVV). A requires for dimerization and lipidd rafts association region spans residues 143 to 147 (GIIVG). Topologically, residues 163–172 (MKKISGRFSP) are cytoplasmic. The tract at residues 164–165 (KK) is requires for interaction with MSN and EZR.

The protein belongs to the podoplanin family. In terms of assembly, homodimer. Interacts with CLEC1B; the interaction is independent of CLEC1B glycosylation and activates CLEC1B; the interaction is dependent of sialic acid on O-glycans. Interacts with CD9; this interaction is homophilic and attenuates platelet aggregation and pulmonary metastasis induced by PDPN. Interacts with LGALS8; the interaction is glycosylation-dependent; may participate in connection of the lymphatic endothelium to the surrounding extracellular matrix. Interacts with HSPA9. Interacts (via extracellular domain) with CD44; this interaction is required for PDPN-mediated directional migration and regulation of lamellipodia extension/stabilization during cell spreading and migration. Interacts (via cytoplasmic domain) with MSN and EZR; activates RHOA and promotes epithelial-mesenchymal transition. Interacts with CCL21; relocalized PDPN to the basolateral membrane. Extensively O-glycosylated. Contains sialic acid residues. O-glycosylation is necessary for platelet aggregation activity. Disialylated at Thr-52; sialic acid is critical for platelet-aggregating activity and for CLEC1B interaction. In terms of processing, phosphorylated by PKA; decreases cell migration. Post-translationally, the N-terminus is blocked. In terms of tissue distribution, detected at high levels in lung and brain, at lower levels in kidney, stomach, liver, spleen and esophagus, and not detected in skin and small intestine. Expressed in epithelial cells of choroid plexus, ependyma, glomerulus and alveolus, in mesothelial cells and in endothelia of lymphatic vessels. Also expressed in stromal cells of peripheral lymphoid tissue and thymic epithelial cells. Detected in carcinoma cell lines and cultured fibroblasts. Expressed at higher levels in colon carcinomas than in normal colon tissue.

It localises to the membrane. The protein resides in the cell projection. Its subcellular location is the lamellipodium membrane. It is found in the filopodium membrane. The protein localises to the microvillus membrane. It localises to the ruffle membrane. The protein resides in the membrane raft. Its subcellular location is the apical cell membrane. It is found in the basolateral cell membrane. The protein localises to the invadopodium. In terms of biological role, mediates effects on cell migration and adhesion through its different partners. During development plays a role in blood and lymphatic vessels separation by binding CLEC1B, triggering CLEC1B activation in platelets and leading to platelet activation and/or aggregation. Interaction with CD9, on the contrary, attenuates platelet aggregation and pulmonary metastasis induced by PDPN. Mediates effects on cell migration and adhesion through its different partners. Through MSN or EZR interaction promotes epithelial-mesenchymal transition (EMT) leading to ERZ phosphorylation and triggering RHOA activation leading to cell migration increase and invasiveness. Interaction with CD44 promotes directional cell migration in epithelial and tumor cells. In lymph nodes (LNs), controls fibroblastic reticular cells (FRCs) adhesion to the extracellular matrix (ECM) and contraction of the actomyosin by maintaining ERM proteins (EZR; MSN and RDX) and MYL9 activation through association with unknown transmembrane proteins. Engagement of CLEC1B by PDPN promotes FRCs relaxation by blocking lateral membrane interactions leading to reduction of ERM proteins (EZR; MSN and RDX) and MYL9 activation. Through binding with LGALS8 may participate in connection of the lymphatic endothelium to the surrounding extracellular matrix. In keratinocytes, induces changes in cell morphology showing an elongated shape, numerous membrane protrusions, major reorganization of the actin cytoskeleton, increased motility and decreased cell adhesion. Controls invadopodia stability and maturation leading to efficient degradation of the extracellular matrix (ECM) in tumor cells through modulation of RHOC activity in order to activate ROCK1/ROCK2 and LIMK1/LIMK2 and inactivation of CFL1. Required for normal lung cell proliferation and alveolus formation at birth. Does not function as a water channel or as a regulator of aquaporin-type water channels. Does not have any effect on folic acid or amino acid transport. The polypeptide is Podoplanin (Mus musculus (Mouse)).